The chain runs to 172 residues: NADH-quinone oxidoreductase subunit B (172 aa).

4 residues coordinate [4Fe-4S] cluster: cysteine 46, cysteine 47, cysteine 111, and cysteine 141.

Belongs to the complex I 20 kDa subunit family. As to quaternary structure, NDH-1 is composed of 14 different subunits. Subunits NuoB, C, D, E, F, and G constitute the peripheral sector of the complex. [4Fe-4S] cluster is required as a cofactor.

It localises to the cell membrane. It carries out the reaction a quinone + NADH + 5 H(+)(in) = a quinol + NAD(+) + 4 H(+)(out). NDH-1 shuttles electrons from NADH, via FMN and iron-sulfur (Fe-S) centers, to quinones in the respiratory chain. The immediate electron acceptor for the enzyme in this species is believed to be a menaquinone. Couples the redox reaction to proton translocation (for every two electrons transferred, four hydrogen ions are translocated across the cytoplasmic membrane), and thus conserves the redox energy in a proton gradient. The chain is NADH-quinone oxidoreductase subunit B from Bacillus mycoides (strain KBAB4) (Bacillus weihenstephanensis).